Here is a 503-residue protein sequence, read N- to C-terminus: Potassium voltage-gated channel subfamily V member 1 (503 aa).

Disordered regions lie at residues 1-20 (MDLSPRNRPLLDSSSLDSGS) and 171-192 (KKDTDDQESQHESEQDFSKGPC). The Cytoplasmic segment spans residues 3 to 213 (LSPRNRPLLD…EKPGSSTAAR (211 aa)). The segment covering 10 to 20 (LLDSSSLDSGS) has biased composition (low complexity). Residues 171-187 (KKDTDDQESQHESEQDF) show a composition bias toward basic and acidic residues. Residues 214 to 234 (IFGVISIIFVAVSIVNMALMS) traverse the membrane as a helical segment. Topologically, residues 235 to 241 (AELSWLN) are extracellular. A helical transmembrane segment spans residues 242 to 262 (LQLLEILEYVCISWFTGEFVL). Over 263–279 (RFLCVKDRCHFLRKVPN) the chain is Cytoplasmic. A helical membrane pass occupies residues 280 to 300 (IIDLLAILPFYITLLVESLSG). The Extracellular segment spans residues 301–312 (SHTTQELENVGR). The helical; Voltage-sensor transmembrane segment at 313-334 (LVQVLRLLRALRMLKLGRHSTG) threads the bilayer. Residues 335 to 348 (LRSLGMTITQCYEE) lie on the Cytoplasmic side of the membrane. The chain crosses the membrane as a helical span at residues 349 to 369 (VGLLLLFLSVGISIFSTIEYF). Positions 395–400 (TVGYGD) match the Selectivity filter motif. A helical membrane pass occupies residues 410-430 (IVAFMCILSGILVLALPIAII). The Cytoplasmic segment spans residues 431-503 (NDRFSACYFT…RSSGGDDFWF (73 aa)).

It belongs to the potassium channel family. V (TC 1.A.1.2) subfamily. Kv8.1/KCNV1 sub-subfamily. In terms of assembly, heteromultimer with KCNB1 and KCNB2. Interacts with KCNC4 and KCND1.

Its subcellular location is the cell membrane. Potassium channel subunit that does not form functional channels by itself. Modulates KCNB1 and KCNB2 channel activity by shifting the threshold for inactivation to more negative values and by slowing the rate of inactivation. Can down-regulate the channel activity of KCNB1, KCNB2, KCNC4 and KCND1, possibly by trapping them in intracellular membranes. The chain is Potassium voltage-gated channel subfamily V member 1 (Kcnv1) from Mus musculus (Mouse).